Here is a 517-residue protein sequence, read N- to C-terminus: Ribonuclease Y (517 aa).

The helical transmembrane segment at 2–22 (EILVYIIIGIAIFILSLLVGI) threads the bilayer. The KH domain maps to 207–267 (TTSTVALPTD…LRREIAKRTL (61 aa)). Positions 333–426 (VLEHSIEVAQ…VAASDALSAS (94 aa)) constitute an HD domain.

The protein belongs to the RNase Y family.

The protein localises to the cell membrane. Endoribonuclease that initiates mRNA decay. This is Ribonuclease Y from Petrotoga mobilis (strain DSM 10674 / SJ95).